A 40-amino-acid polypeptide reads, in one-letter code: Photosystem II reaction center protein X (40 aa).

A helical membrane pass occupies residues 10 to 30 (FFYSILFGAIVLGLLGGGFIF).

This sequence belongs to the PsbX family. Type 1 subfamily. PSII is composed of 1 copy each of membrane proteins PsbA, PsbB, PsbC, PsbD, PsbE, PsbF, PsbH, PsbI, PsbJ, PsbK, PsbL, PsbM, PsbT, PsbX, PsbY, PsbZ, Psb30/Ycf12, peripheral proteins PsbO, CyanoQ (PsbQ), PsbU, PsbV and a large number of cofactors. It forms dimeric complexes.

The protein resides in the cellular thylakoid membrane. Involved in the binding and/or turnover of quinones at the Q(B) site of photosystem II (PSII). PSII is a light-driven water plastoquinone oxidoreductase, using light energy to abstract electrons from H(2)O, generating a proton gradient subsequently used for ATP formation. The polypeptide is Photosystem II reaction center protein X (Acaryochloris marina (strain MBIC 11017)).